We begin with the raw amino-acid sequence, 272 residues long: Aquaporin-1 (272 aa).

The Cytoplasmic segment spans residues 1-11 (MASEFKKKLFW). The helical transmembrane segment at 12–29 (RAVVAEFLAMILFIFISI) threads the bilayer. At 30–48 (GSALGFHYPIKSNQTTGAV) the chain is on the extracellular side. N-linked (GlcNAc...) asparagine glycosylation occurs at Asn42. A helical membrane pass occupies residues 49 to 67 (QDNVKVSLAFGLSIATLAQ). The Cytoplasmic segment spans residues 68 to 70 (SVG). Residues 71 to 84 (HISGAHLNPAVTLG) lie within the membrane without spanning it. The NPA 1 motif lies at 78–80 (NPA). The Cytoplasmic segment spans residues 85–92 (LLLSCQIS). Residues 93–111 (ILRAIMYIIAQCVGAIVAT) form a helical membrane-spanning segment. The Extracellular segment spans residues 112–135 (VILSGITSSLPDNSLGLNALAPGV). The chain crosses the membrane as a helical span at residues 136-155 (NSGQGLGIEIIGTLQLVLCV). Residues 156-166 (LATTDRRRRRD) are Cytoplasmic-facing. A helical membrane pass occupies residues 167–184 (LGDSGPLAIGFSVALGHL). At 185 to 189 (LAIDY) the chain is on the extracellular side. Residues 190 to 202 (TGCGINPARSFGS) lie within the membrane without spanning it. Positions 195 to 197 (NPA) match the NPA 2 motif. The Extracellular segment spans residues 203 to 209 (SVITHNF). A helical transmembrane segment spans residues 210-227 (QDHWIFWVGPFIGAALAV). The Cytoplasmic portion of the chain corresponds to 228–272 (LIYDFILAPRSSDLTDRVKVWTSGQVEEYDLDADDINSRVEMKPK). The residue at position 250 (Ser250) is a Phosphoserine. Tyr256 bears the Phosphotyrosine mark. Ser265 carries the post-translational modification Phosphoserine.

This sequence belongs to the MIP/aquaporin (TC 1.A.8) family. Homotetramer; each monomer provides an independent water pore. Component of the ankyrin-1 complex in the erythrocyte, composed of ANK1, RHCE, RHAG, SLC4A1, EPB42, GYPA, GYPB and AQP1. Interacts with EPHB2; involved in endolymph production in the inner ear. Identified in a complex with STOM. Interacts (via the N-terminal) with ANK1 (via ANK 1-5 repeats). Interacts (via the C-terminal) with EPB42. Detected in fetal kidney (at protein level). Detected in fetal kidney.

Its subcellular location is the cell membrane. It carries out the reaction H2O(in) = H2O(out). It catalyses the reaction nitric oxide(out) = nitric oxide(in). The enzyme catalyses CO2(out) = CO2(in). The catalysed reaction is glycerol(in) = glycerol(out). It carries out the reaction H2O2(out) = H2O2(in). It catalyses the reaction K(+)(in) = K(+)(out). The enzyme catalyses Na(+)(in) = Na(+)(out). Functionally, forms a water channel that facilitates the transport of water across cell membranes, playing a crucial role in water homeostasis in various tissues. Could also be permeable to small solutes including hydrogen peroxide, glycerol and gases such as amonnia (NH3), nitric oxide (NO) and carbon dioxide (CO2). Recruited to the ankyrin-1 complex, a multiprotein complex of the erythrocyte membrane, it could be part of a CO2 metabolon, linking facilitated diffusion of CO2 across the membrane, anion exchange of Cl(-)/HCO3(-) and interconversion of dissolved CO2 and carbonic acid in the cytosol. In vitro, it shows non-selective gated cation channel activity and may be permeable to cations like K(+) and Na(+) in vivo. This is Aquaporin-1 from Ovis aries (Sheep).